The chain runs to 825 residues: Probable inorganic carbon transporter subunit DabA (825 aa).

Zn(2+) is bound by residues cysteine 346, aspartate 348, histidine 516, and cysteine 531.

It belongs to the inorganic carbon transporter (TC 9.A.2) DabA family. Forms a complex with DabB. It depends on Zn(2+) as a cofactor.

It localises to the cell inner membrane. Part of an energy-coupled inorganic carbon pump. This Paracidovorax citrulli (strain AAC00-1) (Acidovorax citrulli) protein is Probable inorganic carbon transporter subunit DabA.